Consider the following 230-residue polypeptide: Transmembrane ascorbate ferrireductase 2 (230 aa).

2 consecutive transmembrane segments (helical) span residues 5-25 (VLGG…IAAL) and 50-70 (VHPV…MLAY). In terms of domain architecture, Cytochrome b561 spans 14–218 (VVRVLGFIIA…LGGFVILGVV (205 aa)). His51 contacts heme b. L-ascorbate-binding residues include Lys77 and Lys81. Residues 82 to 102 (LVHLTLQLTAFILSLIGVWAA) form a helical membrane-spanning segment. His84 is a heme b binding site. Residues Phe105, His106, and Tyr115 each contribute to the monodehydro-L-ascorbate radical site. His118 provides a ligand contact to heme b. A helical membrane pass occupies residues 120–140 (WLGLACLFLFAFQWAAGFVTY). Tyr140, Arg150, and Ala151 together coordinate L-ascorbate. His157 is a binding site for heme b. Residues 157–177 (HVFLGISIYALALVTATTGIL) traverse the membrane as a helical segment. 2 residues coordinate monodehydro-L-ascorbate radical: Phe182 and Asn186. The helical transmembrane segment at 198–218 (LVNTMGVLILILGGFVILGVV) threads the bilayer.

In terms of assembly, homodimer. Requires heme b as cofactor. As to expression, expressed in roots, seedlings, leaves and flowers. Expressed in the L1 layer of the shoot apex, in the epidermis of leaf primordia and young leaves and in vascular bundles. In the differentiation zone of the root, detected in the pericycle and in the epidermis, but not in the cortex. Strongly expressed in the cortical region of the root tip, in the meristematic tissue and in the epidermal cell layer of lateral roots, but not in the root caps. Highly expressed in unfertilized ovules. In mature embryos, expressed in the epidermis, cotyledon tips and root tips.

It localises to the membrane. It carries out the reaction Fe(3+)(out) + L-ascorbate(in) = monodehydro-L-ascorbate radical(in) + Fe(2+)(out) + H(+). Its function is as follows. Two-heme-containing cytochrome. Catalyzes ascorbate-dependent transmembrane ferric-chelate reduction. This chain is Transmembrane ascorbate ferrireductase 2 (CYB561B), found in Arabidopsis thaliana (Mouse-ear cress).